Consider the following 297-residue polypeptide: HTH-type transcriptional regulator ArgP (297 aa).

The region spanning P4–T60 is the HTH lysR-type domain. The segment at residues F21–K40 is a DNA-binding region (H-T-H motif).

This sequence belongs to the LysR transcriptional regulatory family. Homodimer.

Its function is as follows. Controls the transcription of genes involved in arginine and lysine metabolism. The chain is HTH-type transcriptional regulator ArgP from Klebsiella pneumoniae subsp. pneumoniae (strain ATCC 700721 / MGH 78578).